The sequence spans 898 residues: Endoplasmic reticulum metallopeptidase 1 (898 aa).

Met-1 is subject to N-acetylmethionine. Positions 1 to 55 (MEWSSESAAVRRHRGTAERREGEAAASHRQREASAQEDAKGVGRMWGKTENGGGS) are disordered. Residues 1–66 (MEWSSESAAV…VAKTALSEAR (66 aa)) are Cytoplasmic-facing. Positions 29-41 (RQREASAQEDAKG) are enriched in basic and acidic residues. Residues 67–87 (TALALALYLLALRALVQLSLQ) traverse the membrane as a helical segment. Over 88–393 (RLVLSRTSGL…SSSEYRHGSM (306 aa)) the chain is Lumenal. A glycan (N-linked (GlcNAc...) asparagine) is linked at Asn-176. Cysteines 198 and 216 form a disulfide. Residues His-199 and Asp-211 each contribute to the Zn(2+) site. Glu-245 acts as the Proton acceptor in catalysis. 3 residues coordinate Zn(2+): Glu-246, Glu-272, and His-348. The helical transmembrane segment at 394 to 414 (VFFDVLGLLVIAYPSRVGSII) threads the bilayer. The Cytoplasmic portion of the chain corresponds to 415 to 451 (NYMVVMAVVLYLGKKLLRPKHRNANYMRDFLCGLGIT). Residues 452 to 472 (FISWFTSLVTVLIIAVFISLI) traverse the membrane as a helical segment. Residues 473–480 (GQSLSWYN) are Lumenal-facing. Residues 481–501 (YFYIAVCLYGTATVAKIIFIH) form a helical membrane-spanning segment. Topologically, residues 502 to 515 (TLAKRFYYMNASDL) are cytoplasmic. Residues 516–538 (YLGELFFDTSLFVHCAFLVALTY) traverse the membrane as a helical segment. At 539–542 (QGFC) the chain is on the lumenal side. Residues 543-562 (SAFMSAVWVVFPLLTKLCVY) form a helical membrane-spanning segment. Residues 563 to 573 (KDFKKHGAQGR) are Cytoplasmic-facing. Residues 574 to 594 (FVALYLLGMFIPYLYGLYLIW) traverse the membrane as a helical segment. The Lumenal portion of the chain corresponds to 595–615 (AVFEMFTPILGRSGSEIPPDV). The helical transmembrane segment at 616-636 (VLASILAVCVMILSSYFITFI) threads the bilayer. Topologically, residues 637 to 645 (YLVNSTKKT) are cytoplasmic. The chain crosses the membrane as a helical span at residues 646 to 666 (ILTLILVCAVTFLLVCSGAFF). Residues 667 to 898 (PYSSNPESPK…WVSTYSLFVF (232 aa)) are Lumenal-facing. Asn-724 is a glycosylation site (N-linked (GlcNAc...) asparagine).

Belongs to the peptidase M28 family. Zn(2+) is required as a cofactor.

The protein localises to the endoplasmic reticulum membrane. In terms of biological role, within the ovary, required for the organization of somatic cells and oocytes into discrete follicular structures. The chain is Endoplasmic reticulum metallopeptidase 1 from Mus musculus (Mouse).